Here is a 160-residue protein sequence, read N- to C-terminus: Cyclic pyranopterin monophosphate synthase (160 aa).

Substrate-binding positions include 77–79 (MCH) and 114–115 (ME). D129 is an active-site residue.

Belongs to the MoaC family. Homohexamer; trimer of dimers.

It catalyses the reaction (8S)-3',8-cyclo-7,8-dihydroguanosine 5'-triphosphate = cyclic pyranopterin phosphate + diphosphate. The protein operates within cofactor biosynthesis; molybdopterin biosynthesis. In terms of biological role, catalyzes the conversion of (8S)-3',8-cyclo-7,8-dihydroguanosine 5'-triphosphate to cyclic pyranopterin monophosphate (cPMP). This Listeria innocua serovar 6a (strain ATCC BAA-680 / CLIP 11262) protein is Cyclic pyranopterin monophosphate synthase.